Consider the following 342-residue polypeptide: 4-hydroxy-2-oxovalerate aldolase 2 (342 aa).

Residues 8 to 260 (ITVHDMTLRD…ETGVDVFKIQ (253 aa)) form the Pyruvate carboxyltransferase domain. Position 16–17 (16–17 (RD)) interacts with substrate. Residue Asp-17 coordinates Mn(2+). The active-site Proton acceptor is the His-20. Positions 170 and 199 each coordinate substrate. Mn(2+)-binding residues include His-199 and His-201. Tyr-290 contacts substrate.

This sequence belongs to the 4-hydroxy-2-oxovalerate aldolase family.

It carries out the reaction (S)-4-hydroxy-2-oxopentanoate = acetaldehyde + pyruvate. The sequence is that of 4-hydroxy-2-oxovalerate aldolase 2 (mhpE) from Azoarcus sp. (strain BH72).